We begin with the raw amino-acid sequence, 216 residues long: Large ribosomal subunit protein uL1z (216 aa).

This sequence belongs to the universal ribosomal protein uL1 family. As to quaternary structure, interacts with the GTPase NUG2.

The sequence is that of Large ribosomal subunit protein uL1z (RPL10AA) from Arabidopsis thaliana (Mouse-ear cress).